The sequence spans 435 residues: Probable tRNA pseudouridine synthase D (435 aa).

The active-site Nucleophile is Asp95. Residues 170–396 form the TRUD domain; the sequence is GVPNYFGTQR…SSGTRRAVLV (227 aa).

Belongs to the pseudouridine synthase TruD family.

The catalysed reaction is uridine(13) in tRNA = pseudouridine(13) in tRNA. Its function is as follows. Could be responsible for synthesis of pseudouridine from uracil-13 in transfer RNAs. The polypeptide is Probable tRNA pseudouridine synthase D (Natronomonas pharaonis (strain ATCC 35678 / DSM 2160 / CIP 103997 / JCM 8858 / NBRC 14720 / NCIMB 2260 / Gabara) (Halobacterium pharaonis)).